Consider the following 429-residue polypeptide: Z-DNA-binding protein 1 (429 aa).

2 Z-binding domains span residues 8-70 and 103-166; these read PGRE…CLGG and PQFS…TIYR. A disordered region spans residues 68–107; sequence LGGTDPEGEGPAELALSSPAERPQQHAATIPETPGPQFSQ. Short sequence motifs (RIP homotypic interaction motif (RHIM)) lie at residues 195–219 and 253–277; these read NSWI…RQTV and DIHM…LHGV. Disordered stretches follow at residues 277 to 299 and 339 to 429; these read VPSE…AAGP and KMSI…GGGI. Positions 347 to 358 are enriched in gly residues; sequence AGPGGVAGSGEG. The span at 407–420 shows a compositional bias: basic and acidic residues; that stretch reads KAAEGSHYVDEASH.

Homodimer. Interacts (via RIP homotypic interaction motif) with RIPK3; leading to RIPK3 activation and necroptosis; interaction is enhanced by CASP6. Interacts (via RIP homotypic interaction motif) with RIPK1. Component of the AIM2 PANoptosome complex, a multiprotein complex that drives inflammatory cell death (PANoptosis). In terms of assembly, (Microbial infection) Interacts (via RIP homotypic interaction motif/RHIM) with herpes simplex virus 1/HHV-1 protein RIR1/ICP6 (via RHIM); this interaction may induce heteromeric amyloid assemblies and prevent necroptosis activation. Interacts with human herpes simplex virus 1/HHV-1 protein ICP0. Phosphorylated. In terms of tissue distribution, highly expressed in lymphatic tissues including lymph node, leukocytes, tonsil, bone marrow and spleen. Expressed to a lesser extent in thymus, lung and liver.

Its subcellular location is the cytoplasm. The protein resides in the nucleus. Its activity is regulated as follows. ZBP1-dependent necroptosis is normally inhibited by RIPK1: RIPK1 inhibits the ZBP1-induced activation of RIPK3 via FADD-mediated recruitment of CASP8, which cleaves RIPK1 and limits TNF-induced necroptosis. Its function is as follows. Key innate sensor that recognizes and binds Z-RNA structures, which are produced by a number of viruses, such as herpesvirus, orthomyxovirus or flavivirus, and triggers different forms of cell death. ZBP1 acts as an essential mediator of pyroptosis, necroptosis and apoptosis (PANoptosis), an integral part of host defense against pathogens, by activating RIPK3, caspase-8 (CASP8), and the NLRP3 inflammasome. Key activator of necroptosis, a programmed cell death process in response to death-inducing TNF-alpha family members, via its ability to bind Z-RNA: once activated upon Z-RNA-binding, ZBP1 interacts and stimulates RIPK3 kinase, which phosphorylates and activates MLKL, triggering execution of programmed necrosis. In addition to TNF-induced necroptosis, necroptosis can also take place in the nucleus in response to orthomyxoviruses infection: ZBP1 recognizes and binds Z-RNA structures that are produced in infected nuclei by orthomyxoviruses, such as the influenza A virus (IAV), leading to ZBP1 activation, RIPK3 stimulation and subsequent MLKL phosphorylation, triggering disruption of the nuclear envelope and leakage of cellular DNA into the cytosol. ZBP1-dependent cell death in response to IAV infection promotes interleukin-1 alpha (IL1A) induction in an NLRP3-inflammasome-independent manner: IL1A expression is required for the optimal interleukin-1 beta (IL1B) production, and together, these cytokines promote infiltration of inflammatory neutrophils to the lung, leading to the formation of neutrophil extracellular traps. In addition to its direct role in driving necroptosis via its ability to sense Z-RNAs, also involved in PANoptosis triggered in response to bacterial infection: component of the AIM2 PANoptosome complex, a multiprotein complex that triggers PANoptosis. Also acts as the apical sensor of fungal infection responsible for activating PANoptosis. Involved in CASP8-mediated cell death via its interaction with RIPK1 but independently of its ability to sense Z-RNAs. In some cell types, also able to restrict viral replication by promoting cell death-independent responses. In response to Zika virus infection in neurons, promotes a cell death-independent pathway that restricts viral replication: together with RIPK3, promotes a death-independent transcriptional program that modifies the cellular metabolism via up-regulation expression of the enzyme ACOD1/IRG1 and production of the metabolite itaconate. Itaconate inhibits the activity of succinate dehydrogenase, generating a metabolic state in neurons that suppresses replication of viral genomes. (Microbial infection) In case of herpes simplex virus 1/HHV-1 infection, forms hetero-amyloid structures with HHV-1 protein RIR1/ICP6 which may inhibit ZBP1-mediated necroptosis, thereby preventing host cell death pathway and allowing viral evasion. This Homo sapiens (Human) protein is Z-DNA-binding protein 1.